Consider the following 350-residue polypeptide: tRNA-splicing endonuclease (350 aa).

Catalysis depends on residues Tyr-286, His-297, and Lys-328.

Belongs to the tRNA-intron endonuclease family. Archaeal long subfamily. Homodimer.

It carries out the reaction pretRNA = a 3'-half-tRNA molecule with a 5'-OH end + a 5'-half-tRNA molecule with a 2',3'-cyclic phosphate end + an intron with a 2',3'-cyclic phosphate and a 5'-hydroxyl terminus.. Functionally, endonuclease that removes tRNA introns. Cleaves pre-tRNA at the 5'- and 3'-splice sites to release the intron. The products are an intron and two tRNA half-molecules bearing 2',3' cyclic phosphate and 5'-OH termini. Recognizes a pseudosymmetric substrate in which 2 bulged loops of 3 bases are separated by a stem of 4 bp. The chain is tRNA-splicing endonuclease from Methanosarcina barkeri (strain Fusaro / DSM 804).